A 934-amino-acid chain; its full sequence is MSAHDLKLEEIVNAETLRRKLNELADTADESYTSLPMRKVVLQTLKDALASGRANAEDMLMKDGGGTLCAKRLCYLMDTLIDILFEFATTRAYPTRNPSKAENMALVAVGGYGRGGLAQGSDIDLLFLLPYKQTPWGEQVVEYTLYMLWDMGLKVGHSTRNIDECIRLAREDMTIRTALLDARFLTGDKDLFRTLEIRFEEEIVKGTEPEFIQAKLAERDARHRKAGETRYLVEPNVKEGKGGQRDLHTLFWITKYFYRVKTKEELVKLGVLSRAELKLFNKAEDFLWAVRCHMHFATLKAEERLSFDIQPEIAQRLGYTAHPGQNYVERFIKHYFLVAKDVGDLTRIICAALEEQQAKHVPGFNRIFLTFSRRKRKLSDDGAFISENHRINIARPDIFRQDPVNMIRLFHLADRHGLEFHPEAMQSLTRSLKLINADLRENPEANRLFLEILTSPRNPELILRRMNESGVLGKFIPDFGKIVAMMQFNMYHHYTVDEHLLRCIAVLSEIEHGELKTEHPLSNHLITTIKRDRNLLYVTLLLHDIAKGRPEDHSIAGARIARRLCPRFGLTPSETETVEWLVREHLTMSMVAQSRDLNDRKTIIDFADTVQTMERLKLLLILTVCDIKAVGPGIWNGWKGQLLRTLFYETELVLTGGFSELSRAARDKQAREALAERLSDWPKEERDAYLALPYTNYFLTVSLDDQVRHAHFIRDADQQGRALVTMAKPHAFEAVTEITVLAPDHPRLLSVITGACAAAGGNIVDAQIFTTSDGRALDTILISREFDTDDDERRQAERVGKVIEDVLSGKAHLPDMLAKRTKPKKAARAFKVEPRVEINNTLSNKFTVIEVEGLDRPGLLSELTGLISDLSLDIASAHITTFGEKVIDSFYVTDLVGHKISNATRQGNIKRKLLALLGAENGARTNGRSPQAAA.

The interval 1-379 is uridylyltransferase; it reads MSAHDLKLEE…TFSRRKRKLS (379 aa). Positions 380-736 are uridylyl-removing; sequence DDGAFISENH…AKPHAFEAVT (357 aa). Positions 496-613 constitute an HD domain; that stretch reads VDEHLLRCIA…IDFADTVQTM (118 aa). ACT domains follow at residues 737-818 and 848-931; these read EITV…DMLA and VIEV…RSPQ.

It belongs to the GlnD family. It depends on Mg(2+) as a cofactor.

The enzyme catalyses [protein-PII]-L-tyrosine + UTP = [protein-PII]-uridylyl-L-tyrosine + diphosphate. The catalysed reaction is [protein-PII]-uridylyl-L-tyrosine + H2O = [protein-PII]-L-tyrosine + UMP + H(+). With respect to regulation, uridylyltransferase (UTase) activity is inhibited by glutamine, while glutamine activates uridylyl-removing (UR) activity. Modifies, by uridylylation and deuridylylation, the PII regulatory proteins (GlnB and homologs), in response to the nitrogen status of the cell that GlnD senses through the glutamine level. Under low glutamine levels, catalyzes the conversion of the PII proteins and UTP to PII-UMP and PPi, while under higher glutamine levels, GlnD hydrolyzes PII-UMP to PII and UMP (deuridylylation). Thus, controls uridylylation state and activity of the PII proteins, and plays an important role in the regulation of nitrogen assimilation and metabolism. In Brucella ovis (strain ATCC 25840 / 63/290 / NCTC 10512), this protein is Bifunctional uridylyltransferase/uridylyl-removing enzyme.